A 412-amino-acid chain; its full sequence is Multifunctional CCA protein (412 aa).

ATP-binding residues include glycine 8 and arginine 11. Residues glycine 8 and arginine 11 each contribute to the CTP site. Mg(2+) is bound by residues aspartate 21 and aspartate 23. Arginine 91, arginine 137, and arginine 140 together coordinate ATP. Residues arginine 91, arginine 137, and arginine 140 each coordinate CTP. One can recognise an HD domain in the interval 228 to 329 (TGIHTLMTLS…VKLFDSIDAW (102 aa)).

Belongs to the tRNA nucleotidyltransferase/poly(A) polymerase family. Bacterial CCA-adding enzyme type 1 subfamily. Monomer. Can also form homodimers and oligomers. The cofactor is Mg(2+). Ni(2+) serves as cofactor.

It carries out the reaction a tRNA precursor + 2 CTP + ATP = a tRNA with a 3' CCA end + 3 diphosphate. The enzyme catalyses a tRNA with a 3' CCA end + 2 CTP + ATP = a tRNA with a 3' CCACCA end + 3 diphosphate. Its function is as follows. Catalyzes the addition and repair of the essential 3'-terminal CCA sequence in tRNAs without using a nucleic acid template. Adds these three nucleotides in the order of C, C, and A to the tRNA nucleotide-73, using CTP and ATP as substrates and producing inorganic pyrophosphate. tRNA 3'-terminal CCA addition is required both for tRNA processing and repair. Also involved in tRNA surveillance by mediating tandem CCA addition to generate a CCACCA at the 3' terminus of unstable tRNAs. While stable tRNAs receive only 3'-terminal CCA, unstable tRNAs are marked with CCACCA and rapidly degraded. This chain is Multifunctional CCA protein, found in Escherichia coli O7:K1 (strain IAI39 / ExPEC).